A 254-amino-acid polypeptide reads, in one-letter code: Probable phosphatase TTE1963 (254 aa).

Zn(2+)-binding residues include His-14, His-16, His-22, His-47, Glu-80, His-108, His-139, Asp-200, and His-202.

This sequence belongs to the PHP family. The cofactor is Zn(2+).

In Caldanaerobacter subterraneus subsp. tengcongensis (strain DSM 15242 / JCM 11007 / NBRC 100824 / MB4) (Thermoanaerobacter tengcongensis), this protein is Probable phosphatase TTE1963.